We begin with the raw amino-acid sequence, 366 residues long: Prostaglandin F2-alpha receptor (366 aa).

Residues 1-31 (MSINSSKQPASSAAGLIANTTCQTENRLSVF) lie on the Extracellular side of the membrane. N-linked (GlcNAc...) asparagine glycans are attached at residues Asn-4 and Asn-19. A helical transmembrane segment spans residues 32 to 55 (FSIIFMTVGIVSNSLAIAILMKAY). At 56–69 (QRFRRKSKASFLLL) the chain is on the cytoplasmic side. The helical transmembrane segment at 70 to 90 (ASGLVITDFFGHLINGGIAVF) threads the bilayer. Over 91–109 (VYASDKDWIRFDQSNILCS) the chain is Extracellular. A disulfide bond links Cys-108 and Cys-186. A helical membrane pass occupies residues 110–131 (VFGISMVFSGLCPLFLGSTMAI). Over 132–152 (ERCIGVTNPLFHSTKITSKHV) the chain is Cytoplasmic. The chain crosses the membrane as a helical span at residues 153 to 175 (KMILSGVCMFAVFVALLPILGHR). The Extracellular segment spans residues 176–198 (DYQIQASRTWCFYNTEHIEDWED). The chain crosses the membrane as a helical span at residues 199-224 (RFYLLFFSSLGLLALGISFSCNAVTG). Over 225–250 (VTLLRVKFRSQQHRQGRSHHLEMVIQ) the chain is Cytoplasmic. A helical membrane pass occupies residues 251-267 (LLAIMCVSCVCWSPFLV). Residues 268 to 285 (TMANIAINGNNSPVTCET) are Extracellular-facing. Residues 286–307 (TLFALRMATWNQILDPWVYILL) form a helical membrane-spanning segment. Residues 308-366 (RKAVLRNLYKLASRCCGVNIISLHIWELSSIKNSLKVAAISESPAAEKENQQASSEAGL) lie on the Cytoplasmic side of the membrane.

It belongs to the G-protein coupled receptor 1 family. Highest expression in pregnant ovary. Also found in a low extent in the kidney. In the brain, expressed in astrocytes and oligodendrocytes, and meningeal fibroblasts, but not in migroglia cells.

The protein localises to the cell membrane. Its function is as follows. Receptor for prostaglandin F2-alpha (PGF2-alpha). The activity of this receptor is mediated by G proteins which activate a phosphatidylinositol-calcium second messenger system. Initiates luteolysis in the corpus luteum. This is Prostaglandin F2-alpha receptor (Ptgfr) from Rattus norvegicus (Rat).